A 77-amino-acid polypeptide reads, in one-letter code: ATP synthase subunit c (77 aa).

Helical transmembrane passes span 13-33 (IATV…GIVA) and 55-75 (FLGI…YFIF).

It belongs to the ATPase C chain family. As to quaternary structure, F-type ATPases have 2 components, F(1) - the catalytic core - and F(0) - the membrane proton channel. F(1) has five subunits: alpha(3), beta(3), gamma(1), delta(1), epsilon(1). F(0) has three main subunits: a(1), b(2) and c(10-14). The alpha and beta chains form an alternating ring which encloses part of the gamma chain. F(1) is attached to F(0) by a central stalk formed by the gamma and epsilon chains, while a peripheral stalk is formed by the delta and b chains.

It localises to the cell membrane. Functionally, f(1)F(0) ATP synthase produces ATP from ADP in the presence of a proton or sodium gradient. F-type ATPases consist of two structural domains, F(1) containing the extramembraneous catalytic core and F(0) containing the membrane proton channel, linked together by a central stalk and a peripheral stalk. During catalysis, ATP synthesis in the catalytic domain of F(1) is coupled via a rotary mechanism of the central stalk subunits to proton translocation. Key component of the F(0) channel; it plays a direct role in translocation across the membrane. A homomeric c-ring of between 10-14 subunits forms the central stalk rotor element with the F(1) delta and epsilon subunits. This is ATP synthase subunit c from Clavibacter michiganensis subsp. michiganensis (strain NCPPB 382).